The sequence spans 288 residues: Proteasome assembly chaperone 1 (288 aa).

A2 carries the N-acetylalanine modification. A disordered region spans residues 12–38; that stretch reads TPCRAGTEEEEEEEDGNRETPEDREVR. T18 bears the Phosphothreonine mark. Residues 28 to 38 are compositionally biased toward basic and acidic residues; that stretch reads NRETPEDREVR. T54 is modified (phosphothreonine). A Phosphoserine modification is found at S180. K264 is modified (N6-acetyllysine).

Belongs to the PSMG1 family. As to quaternary structure, forms a heterodimer with PSMG2. The PSMG1-PSMG2 heterodimer interacts directly with the PSMA5 and PSMA7 proteasome alpha subunits. In terms of processing, degraded by the proteasome upon completion of 20S proteasome maturation.

The protein localises to the cytoplasm. It is found in the endoplasmic reticulum. Functionally, chaperone protein which promotes assembly of the 20S proteasome as part of a heterodimer with PSMG2. The PSMG1-PSMG2 heterodimer binds to the PSMA5 and PSMA7 proteasome subunits, promotes assembly of the proteasome alpha subunits into the heteroheptameric alpha ring and prevents alpha ring dimerization. The sequence is that of Proteasome assembly chaperone 1 from Bos taurus (Bovine).